We begin with the raw amino-acid sequence, 63 residues long: Arabinogalactan protein 41 (63 aa).

An N-terminal signal peptide occupies residues 1-27 (MSGSRLFFGVSTIVSIIFAILLPMAHA). Pyrrolidone carboxylic acid is present on Gln28. Residues Pro32, Pro34, and Pro36 each carry the 4-hydroxyproline modification. Residues Pro32, Pro34, and Pro36 are each glycosylated (O-linked (Ara...) hydroxyproline). The GPI-anchor amidated serine moiety is linked to residue Ser38. The propeptide at 39–63 (DGTTIDQGIAYVLMLVALVLTYLIH) is removed in mature form.

Belongs to the AG-peptide AGP family. In terms of processing, contains 4-hydroxyproline; hydroxylated on Pro-32, Pro-34 and Pro-36. Post-translationally, O-glycosylated on hydroxyprolines; noncontiguous hydroxylproline residues are glycosylated with arabinogalactan.

It is found in the cell membrane. Proteoglycan that seems to be implicated in diverse developmental roles such as differentiation, cell-cell recognition, embryogenesis and programmed cell death. The polypeptide is Arabinogalactan protein 41 (Arabidopsis thaliana (Mouse-ear cress)).